The chain runs to 188 residues: dCTP deaminase (188 aa).

DCTP-binding positions include 111-116, 135-137, Gln-156, Tyr-170, Lys-179, and Gln-180; these read KSTYAR and TLE. Glu-137 (proton donor/acceptor) is an active-site residue.

Belongs to the dCTP deaminase family. In terms of assembly, homotrimer.

It carries out the reaction dCTP + H2O + H(+) = dUTP + NH4(+). The protein operates within pyrimidine metabolism; dUMP biosynthesis; dUMP from dCTP (dUTP route): step 1/2. In terms of biological role, catalyzes the deamination of dCTP to dUTP. The sequence is that of dCTP deaminase from Rickettsia akari (strain Hartford).